Here is a 190-residue protein sequence, read N- to C-terminus: Elongation factor P-like protein (190 aa).

Belongs to the elongation factor P family.

This Citrobacter koseri (strain ATCC BAA-895 / CDC 4225-83 / SGSC4696) protein is Elongation factor P-like protein.